The primary structure comprises 74 residues: Putative defensin-like protein 186 (74 aa).

Positions methionine 1–alanine 22 are cleaved as a signal peptide. Cystine bridges form between cysteine 25–cysteine 74, cysteine 31–cysteine 51, cysteine 37–cysteine 68, and cysteine 41–cysteine 70.

It belongs to the DEFL family.

It is found in the secreted. The protein is Putative defensin-like protein 186 (LCR40) of Arabidopsis thaliana (Mouse-ear cress).